A 57-amino-acid chain; its full sequence is Amyloid-beta precursor protein (57 aa).

Topologically, residues 1–33 (SEVKMDAEFRHDSGYEVHHQKLVFFAEDVGSNK) are extracellular. 4 residues coordinate Cu(2+): H11, Y15, H18, and H19. 4 residues coordinate Zn(2+): H11, Y15, H18, and H19. A helical membrane pass occupies residues 34 to 57 (GAIIGLMVGGVVIATVIVITLVML).

The protein belongs to the APP family. As to quaternary structure, binds, via its C-terminus, to the PID domain of several cytoplasmic proteins, including APBB family members, the APBA family, MAPK8IP1, SHC1 and NUMB and DAB1. Binding to DAB1 inhibits its serine phosphorylation. Interacts (via NPXY motif) with DAB2 (via PID domain); the interaction is impaired by tyrosine phosphorylation of the NPXY motif. Also interacts with GPCR-like protein BPP, APPBP1, IB1, KNS2 (via its TPR domains), APPBP2 (via BaSS) and DDB1. In vitro, it binds MAPT via the MT-binding domains. Associates with microtubules in the presence of ATP and in a kinesin-dependent manner. Interacts, through a C-terminal domain, with GNAO1. Interacts with CPEB1, ANKS1B, TNFRSF21 and AGER. Interacts with ITM2B. Interacts with ITM2C. Interacts with IDE. Can form homodimers; dimerization is enhanced in the presence of Cu(2+) ions. Can form homodimers; this is promoted by heparin binding. Interacts with SORL1 (via N-terminal ectodomain); this interaction retains APP in the trans-Golgi network and reduces processing into soluble APP-alpha and amyloid-beta peptides. Interacts with PLD3. Interacts with VDAC1. Interacts with NSG1; could regulate APP processing. Amyloid-beta protein 42 interacts with FPR2. Interacts with LRRK2. Interacts (via cytoplasmic domain) with KIF5B. Interacts (via C-terminus) with APBB2/FE65L1 (via C-terminus). Interacts (via intracellular domain) with APBB3. Proteolytically processed under normal cellular conditions. Cleavage either by alpha-secretase, beta-secretase or theta-secretase leads to generation and extracellular release of soluble APP peptides, S-APP-alpha and S-APP-beta, and the retention of corresponding membrane-anchored C-terminal fragments, C80, C83 and C99. Subsequent processing of C80 and C83 by gamma-secretase yields P3 peptides. This is the major secretory pathway and is non-amyloidogenic. Alternatively, presenilin/nicastrin-mediated gamma-secretase processing of C99 releases the amyloid-beta proteins, amyloid-beta protein 40 and amyloid-beta protein 42, major components of amyloid plaques, and the cytotoxic C-terminal fragments, gamma-CTF(50), gamma-CTF(57) and gamma-CTF(59). PSEN1 cleavage is more efficient with C83 than with C99 as substrate (in vitro). Amyloid-beta protein 40 and Amyloid-beta protein 42 are cleaved by ACE. Many other minor amyloid-beta peptides, amyloid-beta 1-X peptides, are found in cerebral spinal fluid (CSF) including the amyloid-beta X-15 peptides, produced from the cleavage by alpha-secretase.

It localises to the cell membrane. The protein resides in the membrane. Its subcellular location is the perikaryon. It is found in the cell projection. The protein localises to the growth cone. It localises to the clathrin-coated pit. The protein resides in the early endosome. Its subcellular location is the cytoplasmic vesicle. It is found in the secreted. The protein localises to the cell surface. It localises to the nucleus. The protein resides in the cytoplasm. Its function is as follows. Functions as a cell surface receptor and performs physiological functions on the surface of neurons relevant to neurite growth, neuronal adhesion and axonogenesis. Interaction between APP molecules on neighboring cells promotes synaptogenesis. Involved in cell mobility and transcription regulation through protein-protein interactions. Can promote transcription activation through binding to APBB1-KAT5 and inhibit Notch signaling through interaction with Numb. Couples to apoptosis-inducing pathways such as those mediated by G(o) and JIP. Inhibits G(o)-alpha ATPase activity. Acts as a kinesin I membrane receptor, mediating the axonal transport of beta-secretase and presenilin 1. By acting as a kinesin I membrane receptor, plays a role in axonal anterograde transport of cargo towards synapses in axons. May be involved in copper homeostasis/oxidative stress through copper ion reduction. In vitro, copper-metallated APP induces neuronal death directly or is potentiated through Cu(2+)-mediated low-density lipoprotein oxidation. Can regulate neurite outgrowth through binding to components of the extracellular matrix such as heparin and collagen I and IV. Induces a AGER-dependent pathway that involves activation of p38 MAPK, resulting in internalization of amyloid-beta peptide and mitochondrial dysfunction in cultured cortical neurons. Provides Cu(2+) ions for GPC1 which are required for release of nitric oxide (NO) and subsequent degradation of the heparan sulfate chains on GPC1. In Ursus maritimus (Polar bear), this protein is Amyloid-beta precursor protein (APP).